A 21-amino-acid chain; its full sequence is Putative pancreatic polypeptide 2 (21 aa).

The protein belongs to the NPY family.

This Homo sapiens (Human) protein is Putative pancreatic polypeptide 2 (PPY2P).